The chain runs to 595 residues: Arginine--tRNA ligase (595 aa).

The 'HIGH' region motif lies at 132–142; it reads ANPTGPLHVGH.

The protein belongs to the class-I aminoacyl-tRNA synthetase family. As to quaternary structure, monomer.

The protein resides in the cytoplasm. It catalyses the reaction tRNA(Arg) + L-arginine + ATP = L-arginyl-tRNA(Arg) + AMP + diphosphate. The protein is Arginine--tRNA ligase of Cupriavidus taiwanensis (strain DSM 17343 / BCRC 17206 / CCUG 44338 / CIP 107171 / LMG 19424 / R1) (Ralstonia taiwanensis (strain LMG 19424)).